Here is a 413-residue protein sequence, read N- to C-terminus: Protein SLX4IP (413 aa).

Glycyl lysine isopeptide (Lys-Gly) (interchain with G-Cter in SUMO2) cross-links involve residues Lys61, Lys79, Lys167, Lys176, and Lys236. Disordered regions lie at residues 172-193 (RTKS…VGRS) and 228-300 (SHQE…GSVE). Residues 238–254 (ENVSQTQPGDTRSQQQL) are compositionally biased toward polar residues. Glycyl lysine isopeptide (Lys-Gly) (interchain with G-Cter in SUMO2) cross-links involve residues Lys288, Lys344, and Lys353. The disordered stretch occupies residues 363 to 413 (SSRHLVTNNPGQAQQSDSAAITEQLATDQGGPSKKRKKLQSYNRGCSGKKN). Polar residues predominate over residues 364-389 (SRHLVTNNPGQAQQSDSAAITEQLAT). The residue at position 389 (Thr389) is a Phosphothreonine. A Glycyl lysine isopeptide (Lys-Gly) (interchain with G-Cter in SUMO2) cross-link involves residue Lys396.

The protein belongs to the SLX4IP family. As to quaternary structure, interacts with SLX4/BTBD12; subunit of different structure-specific endonucleases.

The chain is Protein SLX4IP (Slx4ip) from Mus musculus (Mouse).